The chain runs to 144 residues: Small ribosomal subunit protein bS6 (144 aa).

A disordered region spans residues 95–144; sequence PVTTPSPMMQDDKSKPDENSRGTAAPTVNVADDSASGAQVVAAEENDTQS. Basic and acidic residues predominate over residues 104–114; it reads QDDKSKPDENS.

It belongs to the bacterial ribosomal protein bS6 family.

In terms of biological role, binds together with bS18 to 16S ribosomal RNA. This is Small ribosomal subunit protein bS6 from Nitrosomonas eutropha (strain DSM 101675 / C91 / Nm57).